A 185-amino-acid polypeptide reads, in one-letter code: Ribosome maturation factor RimM (185 aa).

One can recognise a PRC barrel domain in the interval 108 to 183; it reads PGEFHVTDLL…RLEIKTIPGL (76 aa).

Belongs to the RimM family. Binds ribosomal protein uS19.

It is found in the cytoplasm. In terms of biological role, an accessory protein needed during the final step in the assembly of 30S ribosomal subunit, possibly for assembly of the head region. Essential for efficient processing of 16S rRNA. May be needed both before and after RbfA during the maturation of 16S rRNA. It has affinity for free ribosomal 30S subunits but not for 70S ribosomes. The polypeptide is Ribosome maturation factor RimM (Synechocystis sp. (strain ATCC 27184 / PCC 6803 / Kazusa)).